A 129-amino-acid chain; its full sequence is Small ribosomal subunit protein uS11 (129 aa).

The protein belongs to the universal ribosomal protein uS11 family. Part of the 30S ribosomal subunit. Interacts with proteins S7 and S18. Binds to IF-3.

Its function is as follows. Located on the platform of the 30S subunit, it bridges several disparate RNA helices of the 16S rRNA. Forms part of the Shine-Dalgarno cleft in the 70S ribosome. This chain is Small ribosomal subunit protein uS11, found in Staphylococcus epidermidis (strain ATCC 12228 / FDA PCI 1200).